A 502-amino-acid chain; its full sequence is MYRQARWDEPLIFELSRPGRVGYTLPKPIEDVKVEIPEKLKRKTPLELPEVSEPEVVKHYTRLSEMNYGVDSGIYPLGSCTMKYNPKINEEIANHPKVAFIHPYQDERTVQGALKIMWELEQWLKEITGMDRFTLQPAAGANGEFTGVMIIKAYHLDRGDTQRTEILVPDSAHGTNPASASMAGFKVVEIPSNENGTVDLEALENAVSERTAGLMLTNPNTLGIFEDEIEEIAKIVHKVGGLLYYDGANLNGILGKVRPGDMGFDIVHLNLHKTFSTPHGGGGPGAGPVGVKEFLKDYLPVPLVSYDEENDRYYLDYNVPKSIGKVKELFGNFAVLVKALTYLKIMGKEGLREVSEVAVLNANYLARKLKGTRGYELPHKELRKHEVVFSAEPMKKETGVRTLDVAKRLLDFGLHAPTIYFPLIVHEALMIEPTESVSKEELDAYVEALKKISEEAYTNPEIVKSAPHNTAVRRVDDVLAAKKPVITWKMYKELKEKGEIDY.

The residue at position 273 (Lys273) is an N6-(pyridoxal phosphate)lysine.

Belongs to the GcvP family. C-terminal subunit subfamily. As to quaternary structure, the glycine cleavage system is composed of four proteins: P, T, L and H. In this organism, the P 'protein' is a heterodimer of two subunits. Pyridoxal 5'-phosphate serves as cofactor.

It carries out the reaction N(6)-[(R)-lipoyl]-L-lysyl-[glycine-cleavage complex H protein] + glycine + H(+) = N(6)-[(R)-S(8)-aminomethyldihydrolipoyl]-L-lysyl-[glycine-cleavage complex H protein] + CO2. The glycine cleavage system catalyzes the degradation of glycine. The P protein binds the alpha-amino group of glycine through its pyridoxal phosphate cofactor; CO(2) is released and the remaining methylamine moiety is then transferred to the lipoamide cofactor of the H protein. The polypeptide is Probable glycine dehydrogenase (decarboxylating) subunit 2 (Pyrococcus horikoshii (strain ATCC 700860 / DSM 12428 / JCM 9974 / NBRC 100139 / OT-3)).